The sequence spans 93 residues: Small ribosomal subunit protein bS20c (93 aa).

It belongs to the bacterial ribosomal protein bS20 family.

The protein localises to the plastid. It is found in the chloroplast. Its function is as follows. Binds directly to 16S ribosomal RNA. The chain is Small ribosomal subunit protein bS20c from Trieres chinensis (Marine centric diatom).